A 215-amino-acid chain; its full sequence is Na(+)-translocating NADH-quinone reductase subunit D (215 aa).

6 consecutive transmembrane segments (helical) span residues 14 to 34 (PFIS…ALAV), 42 to 62 (FVMA…ISLI), 72 to 92 (IIVQ…LLKA), 103 to 123 (VFVG…AYAM), 131 to 151 (FLDG…VGTI), and 178 to 198 (NGML…IWVL).

It belongs to the NqrDE/RnfAE family. Composed of six subunits; NqrA, NqrB, NqrC, NqrD, NqrE and NqrF.

The protein resides in the cell inner membrane. The enzyme catalyses a ubiquinone + n Na(+)(in) + NADH + H(+) = a ubiquinol + n Na(+)(out) + NAD(+). Functionally, NQR complex catalyzes the reduction of ubiquinone-1 to ubiquinol by two successive reactions, coupled with the transport of Na(+) ions from the cytoplasm to the periplasm. NqrA to NqrE are probably involved in the second step, the conversion of ubisemiquinone to ubiquinol. This is Na(+)-translocating NADH-quinone reductase subunit D from Tolumonas auensis (strain DSM 9187 / NBRC 110442 / TA 4).